Here is a 369-residue protein sequence, read N- to C-terminus: Probable serine/threonine-protein kinase FMP48 (369 aa).

The 368-residue stretch at 2 to 369 (YTKLRSIQSG…EKPCLIQDGK (368 aa)) folds into the Protein kinase domain. Residues 8–16 (IQSGTFSTV) and lysine 31 each bind ATP. Catalysis depends on aspartate 133, which acts as the Proton acceptor.

The protein belongs to the protein kinase superfamily. Ser/Thr protein kinase family.

Its subcellular location is the mitochondrion. The catalysed reaction is L-seryl-[protein] + ATP = O-phospho-L-seryl-[protein] + ADP + H(+). It carries out the reaction L-threonyl-[protein] + ATP = O-phospho-L-threonyl-[protein] + ADP + H(+). The sequence is that of Probable serine/threonine-protein kinase FMP48 (FMP48) from Saccharomyces cerevisiae (strain ATCC 204508 / S288c) (Baker's yeast).